Reading from the N-terminus, the 320-residue chain is Olfactory receptor 13C8 (320 aa).

At 1-25 (MERTNDSTSTEFFLVGLSAHPKLQT) the chain is on the extracellular side. Residue asparagine 5 is glycosylated (N-linked (GlcNAc...) asparagine). The chain crosses the membrane as a helical span at residues 26–46 (VFFVLILWMYLMILLGNGVLI). The Cytoplasmic segment spans residues 47–54 (SVIIFDSH). A helical membrane pass occupies residues 55–75 (LHTPMYFFLCNLSFLDVCYTS). Over 76-99 (SSVPLILASFLAVKKKVSFSGCMV) the chain is Extracellular. A disulfide bridge connects residues cysteine 97 and cysteine 189. Residues 100–120 (QMFISFAMGATECMILGTMAL) traverse the membrane as a helical segment. Residues 121-139 (DRYVAICYPLRYPVIMSKG) are Cytoplasmic-facing. A helical transmembrane segment spans residues 140-160 (AYVAMAAGSWVTGLVDSVVQT). Topologically, residues 161–197 (AFAMQLPFCANNVIKHFVCEILAILKLACADISINVI) are extracellular. The helical transmembrane segment at 198-217 (SMTGSNLIVLVIPLLVISIS) threads the bilayer. Over 218 to 237 (YIFIVATILRIPSTEGKHKA) the chain is Cytoplasmic. A helical transmembrane segment spans residues 238-258 (FSTCSAHLTVVIIFYGTIFFM). Residues 259–277 (YAKPESKASVDSGNEDIIE) lie on the Extracellular side of the membrane. The helical transmembrane segment at 278–298 (ALISLFYGVMTPMLNPLIYSL) threads the bilayer. The Cytoplasmic portion of the chain corresponds to 299–320 (RNKDVKAAVKNILCRKNFSDGK).

It belongs to the G-protein coupled receptor 1 family.

Its subcellular location is the cell membrane. Its function is as follows. Odorant receptor. The sequence is that of Olfactory receptor 13C8 (OR13C8) from Homo sapiens (Human).